The chain runs to 91 residues: Small ribosomal subunit protein bS20 (91 aa).

Disordered regions lie at residues Met-1–Lys-26 and His-67–Ser-91.

Belongs to the bacterial ribosomal protein bS20 family.

Its function is as follows. Binds directly to 16S ribosomal RNA. In Deinococcus deserti (strain DSM 17065 / CIP 109153 / LMG 22923 / VCD115), this protein is Small ribosomal subunit protein bS20.